Consider the following 979-residue polypeptide: Translation initiation factor IF-2 (979 aa).

Residues 68–386 are disordered; the sequence is VKQKQGTPAS…DKRDAASRAA (319 aa). Composition is skewed to basic and acidic residues over residues 102–179, 217–229, and 260–273; these read QDMR…KPEE, EMEKKEDTEEVFR, and TKEDRQREQNDADG. Over residues 317 to 326 the composition is skewed to polar residues; that stretch reads RPAQQQSNAS. A compositionally biased stretch (basic and acidic residues) spans 347-356; that stretch reads DVQRQVKETL. The tr-type G domain occupies 478–646; sequence ARPPIVTVMG…KVLLEADILE (169 aa). Residues 487-494 are G1; that stretch reads GHVDHGKT. 487-494 is a GTP binding site; it reads GHVDHGKT. The segment at 512–516 is G2; sequence GITQH. Residues 534–537 form a G3 region; it reads DTPG. Residues 534-538 and 588-591 each bind GTP; these read DTPGH and NKID. The G4 stretch occupies residues 588 to 591; it reads NKID. Residues 624-626 form a G5 region; that stretch reads SAK.

The protein belongs to the TRAFAC class translation factor GTPase superfamily. Classic translation factor GTPase family. IF-2 subfamily.

It localises to the cytoplasm. One of the essential components for the initiation of protein synthesis. Protects formylmethionyl-tRNA from spontaneous hydrolysis and promotes its binding to the 30S ribosomal subunits. Also involved in the hydrolysis of GTP during the formation of the 70S ribosomal complex. The sequence is that of Translation initiation factor IF-2 from Porphyromonas gingivalis (strain ATCC BAA-308 / W83).